The primary structure comprises 511 residues: Peroxisomal N(1)-acetyl-spermine/spermidine oxidase (511 aa).

The residue at position 1 (methionine 1) is an N-acetylmethionine. FAD is bound by residues alanine 24, glutamate 45, arginine 53, and 69-70; that span reads HW. Substrate is bound by residues histidine 72 and valine 194. An FAD-binding site is contributed by valine 247. Asparagine 320 contributes to the substrate binding site. FAD is bound by residues glutamate 472 and 481 to 482; that span reads TT. Positions 509-511 match the Microbody targeting signal motif; the sequence is PRL.

Belongs to the flavin monoamine oxidase family. Monomer. FAD is required as a cofactor. Widely expressed. Not detected in spleen. Expressed at lower level in neoplastic tissues.

The protein resides in the peroxisome. It is found in the cytoplasm. The catalysed reaction is N(1)-acetylspermine + O2 + H2O = 3-acetamidopropanal + spermidine + H2O2. The enzyme catalyses N(1)-acetylspermidine + O2 + H2O = 3-acetamidopropanal + putrescine + H2O2. It catalyses the reaction N(1),N(12)-diacetylspermine + O2 + H2O = 3-acetamidopropanal + N(1)-acetylspermidine + H2O2. It participates in amine and polyamine metabolism; spermine metabolism. Its function is as follows. Flavoenzyme which catalyzes the oxidation of N(1)-acetylspermine to spermidine and is thus involved in the polyamine back-conversion. Can also oxidize N(1)-acetylspermidine to putrescine. Substrate specificity: N(1)-acetylspermine = N(1)-acetylspermidine &gt; N(1),N(12)-diacylspermine &gt;&gt; spermine. Does not oxidize spermidine. Plays an important role in the regulation of polyamine intracellular concentration and has the potential to act as a determinant of cellular sensitivity to the antitumor polyamine analogs. The polypeptide is Peroxisomal N(1)-acetyl-spermine/spermidine oxidase (PAOX) (Homo sapiens (Human)).